Consider the following 166-residue polypeptide: Transcription antitermination protein NusB (166 aa).

The protein belongs to the NusB family.

Functionally, involved in transcription antitermination. Required for transcription of ribosomal RNA (rRNA) genes. Binds specifically to the boxA antiterminator sequence of the ribosomal RNA (rrn) operons. The sequence is that of Transcription antitermination protein NusB from Chromohalobacter salexigens (strain ATCC BAA-138 / DSM 3043 / CIP 106854 / NCIMB 13768 / 1H11).